A 314-amino-acid polypeptide reads, in one-letter code: uncharacterized protein (314 aa).

The first 18 residues, Met1–Ser18, serve as a signal peptide directing secretion. 4 N-linked (GlcNAc...) asparagine glycosylation sites follow: Asn68, Asn72, Asn106, and Asn256.

It is found in the secreted. This is an uncharacterized protein from Caenorhabditis elegans.